A 122-amino-acid chain; its full sequence is Small ribosomal subunit protein uS13 (122 aa).

A disordered region spans residues 91–122 (RHRRGLPVHGQRTKTNARTRKGPKRTVAGKKK).

It belongs to the universal ribosomal protein uS13 family. Part of the 30S ribosomal subunit. Forms a loose heterodimer with protein S19. Forms two bridges to the 50S subunit in the 70S ribosome.

In terms of biological role, located at the top of the head of the 30S subunit, it contacts several helices of the 16S rRNA. In the 70S ribosome it contacts the 23S rRNA (bridge B1a) and protein L5 of the 50S subunit (bridge B1b), connecting the 2 subunits; these bridges are implicated in subunit movement. Contacts the tRNAs in the A and P-sites. The protein is Small ribosomal subunit protein uS13 of Kocuria rhizophila (strain ATCC 9341 / DSM 348 / NBRC 103217 / DC2201).